Consider the following 464-residue polypeptide: Splicing factor 3A subunit 2 (464 aa).

Met1 is subject to N-acetylmethionine. The disordered stretch occupies residues 1–27 (MDFQHRPGGKTGSGGVASSSESNRDRR). Position 10 is an N6-acetyllysine (Lys10). The segment at 54-84 (YECKLCLTLHNNEGSYLAHTQGKKHQTNLAR) adopts a Matrin-type zinc-finger fold. Position 153 is a phosphoserine (Ser153). Pro residues-rich tracts occupy residues 217 to 295 (PPAP…PVVH), 303 to 323 (PPAP…PGVH), and 331 to 369 (PPAP…PPPS). The segment at 217–464 (PPAPPSLPAG…GNIPPPPPTN (248 aa)) is disordered. Residues 370–392 (AGVHPQAPGVHPAAPAVHPQAPG) are compositionally biased toward low complexity. Over residues 435-464 (VHPPTPMPPMLRPPLPSEGPGNIPPPPPTN) the composition is skewed to pro residues.

This sequence belongs to the SF3A2 family. As to quaternary structure, component of the 17S U2 SnRNP complex, a ribonucleoprotein complex that contains small nuclear RNA (snRNA) U2 and a number of specific proteins. Part of the SF3A subcomplex of the 17S U2 SnRNP complex which is composed of three subunits; SF3A3/SAP61, SF3A2/SAP62 and SF3A1/SAP114. SF3A associates with the splicing factor SF3B and a 12S RNA unit to form the mature 17S U2 small nuclear ribonucleoprotein complex (17S U2 snRNP). Identified in the spliceosome 'E' complex, a precursor of the spliceosome 'A' complex. Identified in the spliceosome 'A' and 'B' complexes. Identified in the spliceosome 'C' complex. Interacts with HTATSF1.

The protein localises to the nucleus. Component of the 17S U2 SnRNP complex of the spliceosome, a large ribonucleoprotein complex that removes introns from transcribed pre-mRNAs. The 17S U2 SnRNP complex (1) directly participates in early spliceosome assembly and (2) mediates recognition of the intron branch site during pre-mRNA splicing by promoting the selection of the pre-mRNA branch-site adenosine, the nucleophile for the first step of splicing. Within the 17S U2 SnRNP complex, SF3A2 is part of the SF3A subcomplex that contributes to the assembly of the 17S U2 snRNP, and the subsequent assembly of the pre-spliceosome 'E' complex and the pre-catalytic spliceosome 'A' complex. Involved in pre-mRNA splicing as a component of pre-catalytic spliceosome 'B' complexes, including the Bact complex. Interacts directly with the duplex formed by U2 snRNA and the intron. This Homo sapiens (Human) protein is Splicing factor 3A subunit 2 (SF3A2).